A 94-amino-acid chain; its full sequence is Small ribosomal subunit protein uS19c (94 aa).

The protein belongs to the universal ribosomal protein uS19 family.

The protein localises to the plastid. The protein resides in the chloroplast. Its function is as follows. Protein S19 forms a complex with S13 that binds strongly to the 16S ribosomal RNA. The chain is Small ribosomal subunit protein uS19c from Pleurastrum terricola (Filamentous green alga).